A 417-amino-acid polypeptide reads, in one-letter code: Gamma-glutamyl phosphate reductase (417 aa).

This sequence belongs to the gamma-glutamyl phosphate reductase family.

It localises to the cytoplasm. It catalyses the reaction L-glutamate 5-semialdehyde + phosphate + NADP(+) = L-glutamyl 5-phosphate + NADPH + H(+). The protein operates within amino-acid biosynthesis; L-proline biosynthesis; L-glutamate 5-semialdehyde from L-glutamate: step 2/2. Catalyzes the NADPH-dependent reduction of L-glutamate 5-phosphate into L-glutamate 5-semialdehyde and phosphate. The product spontaneously undergoes cyclization to form 1-pyrroline-5-carboxylate. The polypeptide is Gamma-glutamyl phosphate reductase (Haemophilus influenzae (strain PittGG)).